The following is a 367-amino-acid chain: Molybdopterin synthase catalytic subunit (367 aa).

Substrate is bound by residues 101-102 (HR), Lys117, and 124-126 (KKE). The disordered stretch occupies residues 326–345 (HFTKREPSSMEAAPPKKIRK).

This sequence belongs to the MoaE family. MOCS2B subfamily. Heterotetramer; composed of 2 small (Mocs2A) and 2 large (Mocs2B) subunits.

It is found in the cytoplasm. The enzyme catalyses 2 [molybdopterin-synthase sulfur-carrier protein]-C-terminal-Gly-aminoethanethioate + cyclic pyranopterin phosphate + H2O = molybdopterin + 2 [molybdopterin-synthase sulfur-carrier protein]-C-terminal Gly-Gly + 2 H(+). It participates in cofactor biosynthesis; molybdopterin biosynthesis. Functionally, catalytic subunit of the molybdopterin synthase complex, a complex that catalyzes the conversion of precursor Z into molybdopterin. Acts by mediating the incorporation of 2 sulfur atoms from thiocarboxylated Mocs2A into precursor Z to generate a dithiolene group. This Drosophila sechellia (Fruit fly) protein is Molybdopterin synthase catalytic subunit.